Consider the following 244-residue polypeptide: Tegument protein UL51 (244 aa).

A lipid anchor (S-palmitoyl cysteine; by host) is attached at cysteine 9. A disordered region spans residues 175-244; it reads TAGLGATEAP…SSTEAPLLLA (70 aa). Residues 210 to 220 show a composition bias toward pro residues; the sequence is RPGPVPPADPT.

The protein belongs to the herpesviridae UL51 family. In terms of assembly, oligomerizes. Interacts with UL7; this interaction mediates UL7 incorporation to virions. Phosphorylated. Post-translationally, palmitoylation is necessary for Golgi localization.

The protein resides in the virion tegument. The protein localises to the host cytoplasm. Its subcellular location is the host Golgi apparatus. Its function is as follows. Plays several roles during the time course of infection, including egress of virus particles from the perinuclear space and secondary envelopment of cytoplasmic capsids that bud into specific trans-Golgi network (TGN)-derived membranes. The protein is Tegument protein UL51 of Human herpesvirus 2 (strain HG52) (HHV-2).